Consider the following 482-residue polypeptide: Mannan endo-1,4-beta-mannosidase (482 aa).

The signal sequence occupies residues 1–21; the sequence is MARTLRYLLCGILALAAGSNA. Residues 42-160 enclose the CBM6 domain; it reads TTYEAEDAIL…WYLVDSITLT (119 aa). 2 N-linked (GlcNAc...) asparagine glycosylation sites follow: N171 and N300. The GH26 domain occupies 181–474; sequence ASARALYDYL…YTSDYVLTLD (294 aa). Catalysis depends on E332, which acts as the Proton donor. Residue E422 is the Nucleophile of the active site.

The protein belongs to the glycosyl hydrolase 26 family.

Its subcellular location is the secreted. Its activity is regulated as follows. The activity is completely impaired by Ag(+), partially inhibited by Zn(2+), and enhanced by Co(2+), Ni(2+) and Cu(2+) by 22.6, 14.5 and 20.8 %, respectively. Ca(2+), Na(+), Mg(2+), Mn(2+), urea and EDTA do not significantly affect the mannanase activity. Mannan endo-1,4-beta-mannosidase that exhibits high activity against konjac glucomannan and carob galactomannan, as well as a lower activity toward beta-mannan. Shows no activity against barley beta-glucan, birchwood xylan, and low viscosity carboxymethyl cellulose (CMC). Has the ability to hydrolyze manno-oligosaccharides such as M4 which is degraded slightly to M3 and M1, M5 which is mainly degraded to M4 and M1, and M6 which is mostly hydrolyzed to M4 and M2. Shows no activity toward M2 and M3 manno-oligosaccharides. The protein is Mannan endo-1,4-beta-mannosidase of Thermothelomyces thermophilus (strain ATCC 42464 / BCRC 31852 / DSM 1799) (Sporotrichum thermophile).